The chain runs to 89 residues: Small ribosomal subunit protein uS15 (89 aa).

It belongs to the universal ribosomal protein uS15 family. Part of the 30S ribosomal subunit. Forms a bridge to the 50S subunit in the 70S ribosome, contacting the 23S rRNA.

In terms of biological role, one of the primary rRNA binding proteins, it binds directly to 16S rRNA where it helps nucleate assembly of the platform of the 30S subunit by binding and bridging several RNA helices of the 16S rRNA. Its function is as follows. Forms an intersubunit bridge (bridge B4) with the 23S rRNA of the 50S subunit in the ribosome. This is Small ribosomal subunit protein uS15 from Neisseria gonorrhoeae (strain ATCC 700825 / FA 1090).